The sequence spans 498 residues: MASQGTKRSYEQMETGGERQNATEIRASVGRMVGGIGRFYIQMCTELKLSDYEGRLIQNSITIERMVLSAFDERRNKYLEEHPSAGKDPKKTGGPIYRRRDGKWMRELILYDKEEIRRIWRQANNGEDATAGLTHLMIWHSNLNDATYQRTRALVRTGMDPRMCSLMQGSTLPRRSGAAGAAVKGVGTMVMELIRMVKRGINDRNFWRGENGRRTRIAYERMCNILKGKFQTAAQRAMMDQVRESRNPGNAEIEDLIFLARSALILRGSVAHKSCLPACVYGLAVASGYDFEREGYSLVGIDPFRLLQNSQVLSLIRPNENPAHKSQLVWMACHSAAFEDLRVSSFIRGTRVIPRGQLSTRGVQIASNENMETMDSSTLELRSRYWAIRTRSGGNTNQQRASAGQISVQPTFSVQRNLPFERATIMAAFTGNTEGRTSDMRTEIIRMMESARPEDVSFQGRGVFELSDEKATNPIVPSFDMSNEGSYFFGDNAEEYDN.

The short motif at 1–18 (MASQGTKRSYEQMETGGE) is the Unconventional nuclear localization signal element. The segment at 1–21 (MASQGTKRSYEQMETGGERQN) is disordered. A Bipartite nuclear localization signal motif is present at residues 198 to 216 (KRGINDRNFWRGENGRRTR).

This sequence belongs to the influenza viruses nucleoprotein family. In terms of assembly, homomultimerizes to form the nucleocapsid. May bind host exportin-1/XPO1. Binds to viral genomic RNA. Protein-RNA contacts are mediated by a combination of electrostatic interactions between positively charged residues and the phosphate backbone and planar interactions between aromatic side chains and bases. In terms of processing, late in virus-infected cells, may be cleaved from a 56-kDa protein to a 53-kDa protein by a cellular caspase. This cleavage might be a marker for the onset of apoptosis in infected cells or have a specific function in virus host interaction.

The protein resides in the virion. Its subcellular location is the host nucleus. Encapsidates the negative strand viral RNA, protecting it from nucleases. The encapsidated genomic RNA is termed the ribonucleoprotein (RNP) and serves as template for transcription and replication. The RNP needs to be localized in the host nucleus to start an infectious cycle, but is too large to diffuse through the nuclear pore complex. NP comprises at least 2 nuclear localization signals that are responsible for the active RNP import into the nucleus through cellular importin alpha/beta pathway. Later in the infection, nclear export of RNPs are mediated through viral proteins NEP interacting with M1 which binds nucleoproteins. It is possible that nucleoprotein binds directly host exportin-1/XPO1 and plays an active role in RNPs nuclear export. M1 interaction with RNP seems to hide nucleoprotein's nuclear localization signals. Soon after a virion infects a new cell, M1 dissociates from the RNP under acidification of the virion driven by M2 protein. Dissociation of M1 from RNP unmasks nucleoprotein's nuclear localization signals, targeting the RNP to the nucleus. This chain is Nucleoprotein, found in Influenza A virus (strain A/Swine/Hong Kong/126/1982 H3N2).